The primary structure comprises 273 residues: MDFSNMSILHYLANIVDILVVWFVIYKVIMLIRGTKAVQLLKGIFIIIAVKLLSGFFGLQTVEWITDQMLTWGFLAIIIIFQPELRRALETLGRGNIFTRYGSRIEREQHHLIESIEKSTQYMAKRRIGALISVARDTGMDDYIETGIPLNAKISSQLLINIFIPNTPLHDGAVIIKGNEIASAASYLPLSDSPFLSKELGTRHRAALGISEVTDSITIVVSEETGGISLTKGGELFRDVSEEELHKILLKELVTVTAKKPSIFSKWKGGKSE.

The next 3 membrane-spanning stretches (helical) occupy residues 12 to 32, 37 to 57, and 61 to 81; these read LANI…IMLI, AVQL…SGFF, and TVEW…IIIF. The DAC domain occupies 82 to 242; the sequence is QPELRRALET…GGELFRDVSE (161 aa).

This sequence belongs to the adenylate cyclase family. DacA/CdaA subfamily. In terms of assembly, probably a homodimer.

It is found in the cell membrane. The catalysed reaction is 2 ATP = 3',3'-c-di-AMP + 2 diphosphate. In terms of biological role, catalyzes the condensation of 2 ATP molecules into cyclic di-AMP (c-di-AMP), a signaling compound secreted into the host's cytosol where it triggers the cytosolic surveillance pathway (CSP), a host pathway of innate immunity characterized by expression of beta interferon (IFN-beta) and coregulated genes. Overexpression increases export of c-di-AMP. c-di-AMP is a second messenger that mediates growth, cell wall stability and virulence. The chain is Diadenylate cyclase from Listeria monocytogenes serotype 1/2a (strain 10403S).